The sequence spans 88 residues: HssA/B-like protein 11 (88 aa).

This sequence belongs to the hssA/B family.

The polypeptide is HssA/B-like protein 11 (hssl11) (Dictyostelium discoideum (Social amoeba)).